The sequence spans 515 residues: MSLTKKPVVLVILDGYGYREDSQDNAISAAKTPVMDSLWVNRPHTLIDASGLEVGLPDRQMGNSEVGHVNLGAGRIVYQDLTRLDVEIKERTFFENPVLTAAVDKAVAAGKAVHIMGLASPGGVHSHEDHILAMIELAAARGAEKIYLHAFLDGRDTPPRSAKASLEKFAAKFAEVGKGRIASIIGRYFAMDRDNRWDRVEQAYDLLTLAKGEYEAPNAVAGLEAAYARDENDEFVKATVIRGEGEASAAMEDGDALIFMNFRADRARQITRAFVNRDFEGFSRKKVVKFADFVMLTEYAADIRTACAYPPASLLNTFGEWMAKHNKTQLRISETEKYAHVTFFFNGGVEEPFPGEDRILINSPKVATYDLQPEMSSAELTEKLVGAINSGKYDAIICNYPNGDMVGHTGVFDAAVAAVEALDNCIAQVTRAVEAAGGQMLITADHGNAEQMRDPATGQAHTAHTNLPVPLIYVGDKAVKAVDGGKLSDIAPTLLTLMGMEIPQEMTGKPLFIVE.

Mn(2+) is bound by residues aspartate 14 and serine 64. The active-site Phosphoserine intermediate is serine 64. Substrate-binding positions include histidine 125, 155 to 156 (RD), arginine 187, arginine 193, 263 to 266 (RADR), and lysine 337. 5 residues coordinate Mn(2+): aspartate 404, histidine 408, aspartate 445, histidine 446, and histidine 464.

The protein belongs to the BPG-independent phosphoglycerate mutase family. As to quaternary structure, monomer. Mn(2+) serves as cofactor.

The catalysed reaction is (2R)-2-phosphoglycerate = (2R)-3-phosphoglycerate. The protein operates within carbohydrate degradation; glycolysis; pyruvate from D-glyceraldehyde 3-phosphate: step 3/5. Catalyzes the interconversion of 2-phosphoglycerate and 3-phosphoglycerate. The chain is 2,3-bisphosphoglycerate-independent phosphoglycerate mutase from Cronobacter sakazakii (strain ATCC BAA-894) (Enterobacter sakazakii).